Here is a 361-residue protein sequence, read N- to C-terminus: Peptide chain release factor 1 (361 aa).

Glutamine 236 bears the N5-methylglutamine mark.

Belongs to the prokaryotic/mitochondrial release factor family. Methylated by PrmC. Methylation increases the termination efficiency of RF1.

It is found in the cytoplasm. Its function is as follows. Peptide chain release factor 1 directs the termination of translation in response to the peptide chain termination codons UAG and UAA. The protein is Peptide chain release factor 1 of Lactobacillus delbrueckii subsp. bulgaricus (strain ATCC BAA-365 / Lb-18).